The following is a 480-amino-acid chain: Protein disulfide-isomerase 5-4 (480 aa).

2 N-linked (GlcNAc...) asparagine glycosylation sites follow: Asn74 and Asn99. Residues 120-263 form the Thioredoxin domain; the sequence is FHAGEVLSLI…LVKMVVSLVE (144 aa). Active-site nucleophile residues include Cys170 and Cys173. Cys170 and Cys173 are disulfide-bonded. 3 N-linked (GlcNAc...) asparagine glycosylation sites follow: Asn280, Asn326, and Asn376. A helical membrane pass occupies residues 439–459; that stretch reads FSHFITNVCAIIGGVFTVAGI.

It belongs to the protein disulfide isomerase family. As to expression, widely expressed.

It is found in the membrane. Functionally, acts as a protein-folding catalyst that interacts with nascent polypeptides to catalyze the formation, isomerization, and reduction or oxidation of disulfide bonds. This Arabidopsis thaliana (Mouse-ear cress) protein is Protein disulfide-isomerase 5-4 (PDIL5-4).